We begin with the raw amino-acid sequence, 171 residues long: Large ribosomal subunit protein uL10 (171 aa).

The protein belongs to the universal ribosomal protein uL10 family. In terms of assembly, part of the ribosomal stalk of the 50S ribosomal subunit. The N-terminus interacts with L11 and the large rRNA to form the base of the stalk. The C-terminus forms an elongated spine to which L12 dimers bind in a sequential fashion forming a multimeric L10(L12)X complex.

Functionally, forms part of the ribosomal stalk, playing a central role in the interaction of the ribosome with GTP-bound translation factors. The protein is Large ribosomal subunit protein uL10 of Cereibacter sphaeroides (strain ATCC 17023 / DSM 158 / JCM 6121 / CCUG 31486 / LMG 2827 / NBRC 12203 / NCIMB 8253 / ATH 2.4.1.) (Rhodobacter sphaeroides).